A 152-amino-acid polypeptide reads, in one-letter code: Transcriptional regulator MraZ (152 aa).

2 consecutive SpoVT-AbrB domains span residues 7–51 (KERH…APDR) and 89–132 (LEMV…DPQR).

It belongs to the MraZ family. In terms of assembly, forms oligomers.

The protein localises to the cytoplasm. It is found in the nucleoid. This Pelodictyon phaeoclathratiforme (strain DSM 5477 / BU-1) protein is Transcriptional regulator MraZ.